The chain runs to 66 residues: Cell division protein ZapB (66 aa).

Residues 3-59 are a coiled coil; that stretch reads LELLSQLETKIQATLENIELLKMELEEEKQKSTQLAEKNQKLQQDLNSWSDKVNGLV.

Belongs to the ZapB family. In terms of assembly, homodimer. The ends of the coiled-coil dimer bind to each other, forming polymers. Interacts with FtsZ.

The protein resides in the cytoplasm. Its function is as follows. Non-essential, abundant cell division factor that is required for proper Z-ring formation. It is recruited early to the divisome by direct interaction with FtsZ, stimulating Z-ring assembly and thereby promoting cell division earlier in the cell cycle. Its recruitment to the Z-ring requires functional FtsA or ZipA. This chain is Cell division protein ZapB, found in Shewanella denitrificans (strain OS217 / ATCC BAA-1090 / DSM 15013).